Reading from the N-terminus, the 822-residue chain is Cadherin-3 (822 aa).

Positions 1–25 are cleaved as a signal peptide; that stretch reads MELLSGPHAFLLLLLQVCWLRSVVS. Residues 26–99 constitute a propeptide that is removed on maturation; the sequence is EPYRAGFIGE…PTRILRRRKR (74 aa). Cadherin domains are found at residues 100-207, 208-320, 321-432, 433-538, and 539-645; these read EWVM…KPKF, TQDT…APEF, EPQK…APVF, VPPS…DHGP, and IPEP…RPWK. Residues 100–647 lie on the Extracellular side of the membrane; that stretch reads EWVMPPIFVP…NDCPRPWKGG (548 aa). N-linked (GlcNAc...) asparagine glycosylation is present at Asn192. N-linked (GlcNAc...) asparagine glycosylation is present at Asn558. A helical membrane pass occupies residues 648–670; it reads FILPILGAVLALLTLLLALLLLV. Topologically, residues 671-822 are cytoplasmic; it reads RKKRKVKEPL…ADMYGGGEDD (152 aa).

In terms of assembly, interacts with CDCP1 and CTNNB1.

The protein resides in the cell membrane. In terms of biological role, cadherins are calcium-dependent cell adhesion proteins. They preferentially interact with themselves in a homophilic manner in connecting cells; cadherins may thus contribute to the sorting of heterogeneous cell types. This chain is Cadherin-3 (Cdh3), found in Mus musculus (Mouse).